The sequence spans 178 residues: Translation initiation factor IF-3 (178 aa).

This sequence belongs to the IF-3 family. Monomer.

It localises to the cytoplasm. Its function is as follows. IF-3 binds to the 30S ribosomal subunit and shifts the equilibrium between 70S ribosomes and their 50S and 30S subunits in favor of the free subunits, thus enhancing the availability of 30S subunits on which protein synthesis initiation begins. The protein is Translation initiation factor IF-3 of Ureaplasma parvum serovar 3 (strain ATCC 700970).